The chain runs to 595 residues: DNA primase (595 aa).

A CHC2-type zinc finger spans residues 38 to 62 (CPFHDEKTPSFIVYPTRGHYHCYGC). The region spanning 251–331 (RRVILVEGQA…GITAIVCRLP (81 aa)) is the Toprim domain. Residues Glu-257, Asp-302, and Asp-304 each coordinate Mg(2+). A compositionally biased stretch (basic and acidic residues) spans 430–441 (KGKKVSAKEPSS). Residues 430 to 451 (KGKKVSAKEPSSESKQTSTEGK) form a disordered region.

This sequence belongs to the DnaG primase family. In terms of assembly, monomer. Interacts with DnaB. The cofactor is Zn(2+). Mg(2+) is required as a cofactor.

The enzyme catalyses ssDNA + n NTP = ssDNA/pppN(pN)n-1 hybrid + (n-1) diphosphate.. Functionally, RNA polymerase that catalyzes the synthesis of short RNA molecules used as primers for DNA polymerase during DNA replication. The polypeptide is DNA primase (Chlamydia trachomatis serovar D (strain ATCC VR-885 / DSM 19411 / UW-3/Cx)).